The primary structure comprises 546 residues: RuBisCO large subunit-binding protein subunit alpha, chloroplastic (546 aa).

The N-terminal 6 residues, 1 to 6, are a transit peptide targeting the chloroplast; the sequence is RFSVRA. Ser50 bears the Phosphoserine mark.

Belongs to the chaperonin (HSP60) family. In terms of assembly, oligomer of probably six alpha and six beta subunits.

Its subcellular location is the plastid. The protein resides in the chloroplast. Its function is as follows. This protein binds RuBisCO small and large subunits and is implicated in the assembly of the enzyme oligomer. The sequence is that of RuBisCO large subunit-binding protein subunit alpha, chloroplastic from Brassica napus (Rape).